Here is a 280-residue protein sequence, read N- to C-terminus: GTP-binding protein rhoC (280 aa).

The segment at 13–59 (TSRRHSLVTPPPSVAPRQNRMRSQSVRVSNGTVSTDNSMSSGRVSEA) is disordered. The segment covering 33 to 59 (MRSQSVRVSNGTVSTDNSMSSGRVSEA) has biased composition (polar residues). Residue 76-83 (GDGGCGKT) coordinates GTP. Positions 98-106 (YVPTVFENY) match the Effector region motif. GTP-binding positions include 125 to 129 (DTAGQ) and 183 to 186 (LKSD). The segment at 251–275 (WDTRLPSSSGKPGGKPIGGKKIKKR) is disordered. The residue at position 277 (cysteine 277) is a Cysteine methyl ester. Cysteine 277 is lipidated: S-geranylgeranyl cysteine. A propeptide spans 278 to 280 (KIL) (removed in mature form).

The protein belongs to the small GTPase superfamily. Rho family.

It is found in the cell membrane. This Emericella nidulans (strain FGSC A4 / ATCC 38163 / CBS 112.46 / NRRL 194 / M139) (Aspergillus nidulans) protein is GTP-binding protein rhoC (rhoC).